Here is a 232-residue protein sequence, read N- to C-terminus: Orotidine 5'-phosphate decarboxylase (232 aa).

Residues Asp13, Lys35, 62-71 (DLKFHDIPNT), Thr122, Arg182, Gln191, Gly211, and Arg212 each bind substrate. Lys64 acts as the Proton donor in catalysis.

This sequence belongs to the OMP decarboxylase family. Type 1 subfamily. Homodimer.

The enzyme catalyses orotidine 5'-phosphate + H(+) = UMP + CO2. It participates in pyrimidine metabolism; UMP biosynthesis via de novo pathway; UMP from orotate: step 2/2. Functionally, catalyzes the decarboxylation of orotidine 5'-monophosphate (OMP) to uridine 5'-monophosphate (UMP). In Pseudomonas syringae pv. syringae (strain B728a), this protein is Orotidine 5'-phosphate decarboxylase.